Consider the following 628-residue polypeptide: tRNA uridine 5-carboxymethylaminomethyl modification enzyme MnmG (628 aa).

Residues 14 to 19, valine 126, and serine 181 each bind FAD; that span reads GAGHAG. 273 to 287 lines the NAD(+) pocket; the sequence is GPRYCPSIEDKVVRF. Residue glutamine 370 coordinates FAD.

It belongs to the MnmG family. As to quaternary structure, homodimer. Heterotetramer of two MnmE and two MnmG subunits. It depends on FAD as a cofactor.

It is found in the cytoplasm. Its function is as follows. NAD-binding protein involved in the addition of a carboxymethylaminomethyl (cmnm) group at the wobble position (U34) of certain tRNAs, forming tRNA-cmnm(5)s(2)U34. The chain is tRNA uridine 5-carboxymethylaminomethyl modification enzyme MnmG from Bacillus subtilis (strain 168).